We begin with the raw amino-acid sequence, 146 residues long: Hemoglobin cathodic subunit beta (146 aa).

In terms of domain architecture, Globin spans 2-146 (HFSDAERDAI…VAAALSSRYF (145 aa)). Heme b is bound by residues histidine 63 and histidine 92.

Belongs to the globin family. As to quaternary structure, heterotetramer of two alpha chains and two beta chains. In terms of tissue distribution, red blood cells.

Involved in oxygen transport from gills to the various peripheral tissues. The polypeptide is Hemoglobin cathodic subunit beta (hbb) (Hoplosternum littorale (Hassar)).